We begin with the raw amino-acid sequence, 343 residues long: Transmembrane protein 82 (343 aa).

8 helical membrane passes run 30–50 (GLIG…YFFV), 77–97 (LAGL…LVVL), 121–141 (LQLY…GLSF), 145–167 (GAPH…GLGA), 203–223 (LLGR…VALI), 233–252 (AMRF…IYMQ), 263–283 (SQVQ…LTVG), and 285–305 (WLDL…LVGV). The span at 320–333 (QRPPVSTPSQPLPS) shows a compositional bias: pro residues. Residues 320–343 (QRPPVSTPSQPLPSAPQSQSSAPS) are disordered. The segment covering 334 to 343 (APQSQSSAPS) has biased composition (low complexity).

Belongs to the TMEM82 family.

It localises to the membrane. This is Transmembrane protein 82 (TMEM82) from Homo sapiens (Human).